Consider the following 187-residue polypeptide: MKQILDFIPLIIFFALYKMYDIYVATGALIAATAIQIVVTYALYKKVEKMQLITFLMVAIFGGMTIFLHDDNFIKWKVTIVYAVFAIGLTVSHVMGKSAIKGMLGKEITLPESVWANINWAWVGFFTFCAGLNIYVAYQLPLDVWVNFKVFGLLAATLVFTVLTGGYIYKHLPKEQNGQSSDVPTDE.

Transmembrane regions (helical) follow at residues 25–45 (ATGA…ALYK), 50–70 (MQLI…FLHD), 76–96 (WKVT…HVMG), 118–138 (INWA…YVAY), and 148–168 (FKVF…GGYI).

This sequence belongs to the YciB family.

Its subcellular location is the cell inner membrane. In terms of biological role, plays a role in cell envelope biogenesis, maintenance of cell envelope integrity and membrane homeostasis. In Vibrio vulnificus (strain CMCP6), this protein is Inner membrane-spanning protein YciB.